The sequence spans 479 residues: Glutamate--tRNA ligase (479 aa).

Residues 9–19 (PSPTGLFHIGT) carry the 'HIGH' region motif. The 'KMSKS' region signature appears at 248-252 (KLSKR). Lys251 lines the ATP pocket.

It belongs to the class-I aminoacyl-tRNA synthetase family. Glutamate--tRNA ligase type 1 subfamily. Monomer.

Its subcellular location is the cytoplasm. It catalyses the reaction tRNA(Glu) + L-glutamate + ATP = L-glutamyl-tRNA(Glu) + AMP + diphosphate. Catalyzes the attachment of glutamate to tRNA(Glu) in a two-step reaction: glutamate is first activated by ATP to form Glu-AMP and then transferred to the acceptor end of tRNA(Glu). This is Glutamate--tRNA ligase from Prochlorococcus marinus (strain MIT 9215).